The chain runs to 197 residues: Chromophore lyase CpcT/CpeT (197 aa).

The protein belongs to the CpcT/CpeT biliprotein lyase family.

Its function is as follows. Covalently attaches a chromophore to Cys residue(s) of phycobiliproteins. The polypeptide is Chromophore lyase CpcT/CpeT (Synechococcus sp. (strain WH8103)).